A 342-amino-acid polypeptide reads, in one-letter code: Ribosomal RNA small subunit methyltransferase C (342 aa).

Belongs to the methyltransferase superfamily. RsmC family. As to quaternary structure, monomer.

Its subcellular location is the cytoplasm. The enzyme catalyses guanosine(1207) in 16S rRNA + S-adenosyl-L-methionine = N(2)-methylguanosine(1207) in 16S rRNA + S-adenosyl-L-homocysteine + H(+). In terms of biological role, specifically methylates the guanine in position 1207 of 16S rRNA in the 30S particle. This Salmonella arizonae (strain ATCC BAA-731 / CDC346-86 / RSK2980) protein is Ribosomal RNA small subunit methyltransferase C.